A 137-amino-acid polypeptide reads, in one-letter code: Protein phosphatase 1 regulatory subunit 1B (137 aa).

Residues 1-137 (DPKDRKKIQF…EEEEEEEDSQ (137 aa)) are disordered. Thr-33 is modified (phosphothreonine; by PKA). Over residues 40–62 (LXEHSSPEEEASPHQRAAGEGHH) the composition is skewed to basic and acidic residues. A phosphoserine mark is found at Ser-44 and Ser-45. The residue at position 74 (Thr-74) is a Phosphothreonine; by CDK5. A compositionally biased stretch (polar residues) spans 88–99 (HLQSISNLGENQ). The residue at position 101 (Ser-101) is a Phosphoserine. Over residues 108 to 117 (GELRELGYPR) the composition is skewed to basic and acidic residues. A compositionally biased stretch (acidic residues) spans 118 to 137 (EEEEEEEEDDEEEEEEEDSQ). A Phosphoserine modification is found at Ser-136.

It belongs to the protein phosphatase inhibitor 1 family. Phosphorylation of Thr-33 is required for activity. Post-translationally, dopamine- and cyclic AMP-regulated neuronal phosphoprotein.

It localises to the cytoplasm. Inhibitor of protein-phosphatase 1. This chain is Protein phosphatase 1 regulatory subunit 1B (PPP1R1B), found in Sus scrofa (Pig).